Reading from the N-terminus, the 245-residue chain is Myelin protein P0 (245 aa).

The first 28 residues, 1-28, serve as a signal peptide directing secretion; the sequence is MEPSGLRTPCSLLALVLLSALVLTPTLA. The Ig-like V-type domain maps to 29–143; that stretch reads IEVYTDREVY…VGKSSYVHLQ (115 aa). The Extracellular portion of the chain corresponds to 29 to 153; it reads IEVYTDREVY…VQEKGPARAG (125 aa). Cys49 and Cys125 form a disulfide bridge. Asn120 carries N-linked (GlcNAc...) asparagine glycosylation. The helical transmembrane segment at 154 to 174 threads the bilayer; that stretch reads LILGIIIAVALALVIVVTILI. Residues 175–245 are Cytoplasmic-facing; it reads LLIRYCWLRR…GIGDSRKDRK (71 aa). Composition is skewed to basic and acidic residues over residues 199–208 and 224–245; these read KLHKAKDSSK and TRGK…KDRK. The disordered stretch occupies residues 199 to 245; that stretch reads KLHKAKDSSKRSSRQTPILYAMLDQTRGKSSEKKAKGGIGDSRKDRK.

This sequence belongs to the myelin P0 protein family.

The protein localises to the cell membrane. In terms of biological role, creation of an extracellular membrane face which guides the wrapping process and ultimately compacts adjacent lamellae. This chain is Myelin protein P0 (mpz), found in Xenopus laevis (African clawed frog).